The following is a 222-amino-acid chain: Capsular polysaccharide type 8 biosynthesis protein cap8A (222 aa).

2 helical membrane passes run 20-40 (ILII…FFVL) and 172-192 (VVNL…YIFF).

It belongs to the CpsC/CapA family.

Its subcellular location is the cell membrane. Its function is as follows. Required for the biosynthesis of type 8 capsular polysaccharide (Cap8/CP8). Might act as the chain-length regulator. This is Capsular polysaccharide type 8 biosynthesis protein cap8A (cap8A) from Staphylococcus aureus.